The following is a 400-amino-acid chain: MASLSQLSGHLNYTCGAENSTGASQARPHAYYALSYCALILAIVFGNGLVCMAVLKERALQTTTNYLVVSLAVADLLVATLVMPWVVYLEVTGGVWNFSRICCDVFVTLDVMMCTASILNLCAISIDRYTAVVMPVHYQHGTGQSSCRRVALMITAVWVLAFAVSCPLLFGFNTTGDPTVCSISNPDFVIYSSVVSFYLPFGVTVLVYARIYVVLKQRRRKRILTRQNSQCNSVRPGFPQQTLSPDPAHLELKRYYSICQDTALGGPGFQERGGELKREEKTRNSLSPTIAPKLSLEVRKLSNGRLSTSLKLGPLQPRGVPLREKKATQMVAIVLGAFIVCWLPFFLTHVLNTHCQTCHVSPELYSATTWLGYVNSALNPVIYTTFNIEFRKAFLKILSC.

Residues 1–32 (MASLSQLSGHLNYTCGAENSTGASQARPHAYY) are Extracellular-facing. N-linked (GlcNAc...) asparagine glycans are attached at residues Asn12 and Asn19. Residues 33–55 (ALSYCALILAIVFGNGLVCMAVL) form a helical membrane-spanning segment. Topologically, residues 56–65 (KERALQTTTN) are cytoplasmic. Residues 66–88 (YLVVSLAVADLLVATLVMPWVVY) form a helical membrane-spanning segment. The Extracellular segment spans residues 89 to 104 (LEVTGGVWNFSRICCD). N-linked (GlcNAc...) asparagine glycosylation is present at Asn97. Cys103 and Cys181 form a disulfide bridge. A helical membrane pass occupies residues 105–126 (VFVTLDVMMCTASILNLCAISI). Asp110 contacts eticlopride. Over 127-149 (DRYTAVVMPVHYQHGTGQSSCRR) the chain is Cytoplasmic. The helical transmembrane segment at 150 to 170 (VALMITAVWVLAFAVSCPLLF) threads the bilayer. The Extracellular portion of the chain corresponds to 171–187 (GFNTTGDPTVCSISNPD). N-linked (GlcNAc...) asparagine glycosylation is present at Asn173. A helical transmembrane segment spans residues 188–209 (FVIYSSVVSFYLPFGVTVLVYA). Topologically, residues 210–329 (RIYVVLKQRR…VPLREKKATQ (120 aa)) are cytoplasmic. A helical membrane pass occupies residues 330 to 351 (MVAIVLGAFIVCWLPFFLTHVL). Eticlopride contacts are provided by Phe345 and His349. Topologically, residues 352 to 366 (NTHCQTCHVSPELYS) are extracellular. A disulfide bond links Cys355 and Cys358. A helical membrane pass occupies residues 367–386 (ATTWLGYVNSALNPVIYTTF). Residues 387–400 (NIEFRKAFLKILSC) are Cytoplasmic-facing.

The protein belongs to the G-protein coupled receptor 1 family. Interacts with CLIC6. Interacts with GRK4. Interacts with PALM. Interacts with FLNA (via filamin repeat 21); increases PKA-mediated phosphorylation of FLNA. In terms of processing, phosphorylated by GRK4 (GRK4-alpha and GRK4-gamma). Palmitoylated. Brain.

The protein localises to the cell membrane. Functionally, dopamine receptor whose activity is mediated by G proteins which inhibit adenylyl cyclase. Promotes cell proliferation. This chain is D(3) dopamine receptor, found in Homo sapiens (Human).